The chain runs to 1039 residues: Integrin alpha-4 (1039 aa).

A signal peptide spans 1–40 (MFSTKSAWLRNGGADQGPRGIALREAVMLLLYFGVPTGPS). The Extracellular portion of the chain corresponds to 41–983 (YNLDPENALL…LHHQRPKRHF (943 aa)). FG-GAP repeat units follow at residues 42 to 107 (NLDP…PNQT), 117 to 184 (SGEP…TELS), 193 to 244 (DYTR…QYKA), 246 to 298 (VDRQ…ENEL), 299 to 358 (NIVY…GAVM), 362 to 419 (ERVL…GISS), and 423 to 485 (QRIE…HPES). N-linked (GlcNAc...) asparagine glycans are attached at residues Asn86, Asn105, and Asn145. Cys98 and Cys108 are joined by a disulfide. Disulfide bonds link Cys151/Cys172 and Cys190/Cys205. The N-linked (GlcNAc...) asparagine glycan is linked to Asn236. The Ca(2+) site is built by Asp321, Asn323, Asp325, Asp329, Asp384, Asp386, Asp388, Asp392, Asp446, Asp448, Asn450, Tyr452, and Asp454. N-linked (GlcNAc...) asparagine glycosylation is present at Asn487. 2 disulfide bridges follow: Cys493/Cys502 and Cys508/Cys564. N-linked (GlcNAc...) asparagine glycans are attached at residues Asn525 and Asn545. Positions 613–623 (KKEKDVIRKMI) match the SG1 motif. An intrachain disulfide couples Cys629 to Cys634. Residues Asn633, Asn652, and Asn667 are each glycosylated (N-linked (GlcNAc...) asparagine). Cys705 and Cys718 are oxidised to a cystine. N-linked (GlcNAc...) asparagine glycosylation is found at Asn813 and Asn828. 2 disulfide bridges follow: Cys859–Cys897 and Cys904–Cys909. The helical transmembrane segment at 984-1007 (TIIIITISLLLGLIVLLLISCVMW) threads the bilayer. The Cytoplasmic portion of the chain corresponds to 1008–1039 (KAGFFKRQYKSILQEENRRDSWSYVNSKSNDD). The short motif at 1010–1014 (GFFKR) is the GFFKR motif element. The residue at position 1028 (Ser1028) is a Phosphoserine.

Belongs to the integrin alpha chain family. Heterodimer of an alpha and a beta subunit. The alpha subunit can sometimes be cleaved into two non-covalently associated fragments. Alpha-4 associates with either beta-1 or beta-7. Alpha-4 interacts with PXN, LPXN, and TGFB1I1/HIC5. Interacts with CSPG4 through CSPG4 chondroitin sulfate glycosaminoglycan. Interacts with JAML; integrin alpha-4/beta-1 may regulate leukocyte to endothelial cells adhesion by controlling JAML homodimerization. ITGA4:ITGB1 is found in a ternary complex with CX3CR1 and CX3CL1. Interacts with MDK. ITGA4:ITGB1 interacts with MDK; this interaction mediates MDK-induced osteoblast cells migration through PXN phosphorylation. Integrin ITGA4:ITGB1 interacts with SVEP1 (via Sushi domain 21); thereby inhibits Ca(2+) intracellular signaling and as a result represses vasocontraction. ITGA4:ITGB1 interacts with SELP. ITGA4:ITGB1 interacts with BCAM. Post-translationally, phosphorylation on Ser-1028 inhibits PXN binding. Expressed in the media layer of the arterial wall (at protein level). Weakly expression in the thymus, spleen and mesenteric lymph nodes.

Its subcellular location is the membrane. Its function is as follows. Integrins alpha-4/beta-1 (VLA-4 or LPAM-2) and alpha-4/beta-7 (LPAM-1) are receptors for fibronectin. They recognize one or more domains within the alternatively spliced CS-1 and CS-5 regions of fibronectin. They are also receptors for VCAM1. Integrin alpha-4/beta-1 recognizes the sequence Q-I-D-S in VCAM1. Integrin alpha-4/beta-7 is also a receptor for MADCAM1. It recognizes the sequence L-D-T in MADCAM1. On activated endothelial cells integrin VLA-4 triggers homotypic aggregation for most VLA-4-positive leukocyte cell lines. It may also participate in cytolytic T-cell interactions with target cells. ITGA4:ITGB1 binds to fractalkine (CX3CL1) and may act as its coreceptor in CX3CR1-dependent fractalkine signaling. ITGA4:ITGB1 binds to PLA2G2A via a site (site 2) which is distinct from the classical ligand-binding site (site 1) and this induces integrin conformational changes and enhanced ligand binding to site 1. Integrin ITGA4:ITGB1 represses PRKCA-mediated L-type voltage-gated channel Ca(2+) influx and ROCK-mediated calcium sensitivity in vascular smooth muscle cells via its interaction with SVEP1, thereby inhibiting vasocontraction. The polypeptide is Integrin alpha-4 (Itga4) (Mus musculus (Mouse)).